Consider the following 328-residue polypeptide: Ferredoxin--NADP reductase (328 aa).

7 residues coordinate FAD: Glu-36, Gln-44, Tyr-49, Val-89, Phe-123, Asp-284, and Thr-324.

The protein belongs to the ferredoxin--NADP reductase type 2 family. As to quaternary structure, homodimer. It depends on FAD as a cofactor.

The enzyme catalyses 2 reduced [2Fe-2S]-[ferredoxin] + NADP(+) + H(+) = 2 oxidized [2Fe-2S]-[ferredoxin] + NADPH. The chain is Ferredoxin--NADP reductase from Lacticaseibacillus paracasei (strain ATCC 334 / BCRC 17002 / CCUG 31169 / CIP 107868 / KCTC 3260 / NRRL B-441) (Lactobacillus paracasei).